A 545-amino-acid polypeptide reads, in one-letter code: CTP synthase (545 aa).

An amidoligase domain region spans residues 1 to 266; the sequence is MTTNYIFVTG…DDLVCARFGI (266 aa). A CTP-binding site is contributed by Ser14. UTP is bound at residue Ser14. Residues 15-20 and Asp72 contribute to the ATP site; that span reads SLGKGI. The Mg(2+) site is built by Asp72 and Glu140. CTP contacts are provided by residues 147–149, 187–192, and Lys223; these read DIE and KTKPTQ. Residues 187–192 and Lys223 each bind UTP; that span reads KTKPTQ. 239-241 provides a ligand contact to ATP; the sequence is KDV. One can recognise a Glutamine amidotransferase type-1 domain in the interval 291 to 542; sequence TIGMVGKYIE…IKAAGENARG (252 aa). Residue Gly352 participates in L-glutamine binding. The Nucleophile; for glutamine hydrolysis role is filled by Cys379. Residues 380 to 383, Glu403, and Arg470 contribute to the L-glutamine site; that span reads LGMQ. Active-site residues include His515 and Glu517.

It belongs to the CTP synthase family. As to quaternary structure, homotetramer.

The enzyme catalyses UTP + L-glutamine + ATP + H2O = CTP + L-glutamate + ADP + phosphate + 2 H(+). It catalyses the reaction L-glutamine + H2O = L-glutamate + NH4(+). It carries out the reaction UTP + NH4(+) + ATP = CTP + ADP + phosphate + 2 H(+). Its pathway is pyrimidine metabolism; CTP biosynthesis via de novo pathway; CTP from UDP: step 2/2. With respect to regulation, allosterically activated by GTP, when glutamine is the substrate; GTP has no effect on the reaction when ammonia is the substrate. The allosteric effector GTP functions by stabilizing the protein conformation that binds the tetrahedral intermediate(s) formed during glutamine hydrolysis. Inhibited by the product CTP, via allosteric rather than competitive inhibition. In terms of biological role, catalyzes the ATP-dependent amination of UTP to CTP with either L-glutamine or ammonia as the source of nitrogen. Regulates intracellular CTP levels through interactions with the four ribonucleotide triphosphates. In Vibrio vulnificus (strain CMCP6), this protein is CTP synthase.